Consider the following 157-residue polypeptide: Large ribosomal subunit protein uL15 (157 aa).

Belongs to the universal ribosomal protein uL15 family. In terms of assembly, part of the 50S ribosomal subunit.

Its function is as follows. Binds to the 23S rRNA. The protein is Large ribosomal subunit protein uL15 of Ehrlichia ruminantium (strain Welgevonden).